The chain runs to 161 residues: Cyclic pyranopterin monophosphate synthase (161 aa).

Residues 75 to 77 (LCH) and 113 to 114 (ME) each bind substrate. Residue Asp-128 is part of the active site.

The protein belongs to the MoaC family. As to quaternary structure, homohexamer; trimer of dimers.

It carries out the reaction (8S)-3',8-cyclo-7,8-dihydroguanosine 5'-triphosphate = cyclic pyranopterin phosphate + diphosphate. It functions in the pathway cofactor biosynthesis; molybdopterin biosynthesis. Its function is as follows. Catalyzes the conversion of (8S)-3',8-cyclo-7,8-dihydroguanosine 5'-triphosphate to cyclic pyranopterin monophosphate (cPMP). The chain is Cyclic pyranopterin monophosphate synthase from Cronobacter sakazakii (strain ATCC BAA-894) (Enterobacter sakazakii).